We begin with the raw amino-acid sequence, 60 residues long: Ixodegrin-like peptide (60 aa).

The N-terminal stretch at 1–19 is a signal peptide; the sequence is MNAVFIAALLILGTSTFDA. The short motif at 49-51 is the Cell attachment site element; it reads RGD.

It belongs to the ixodegrin family. Post-translationally, contains 3 disulfide bonds. As to expression, expressed in salivary glands.

The protein resides in the secreted. Tick salivary platelet aggregation inhibitor that plays an important part in the anti-hemostatic strategy of ticks. Inhibits platelet aggregation induced by ADP, thrombin and thromboxane A2 (TXA2). Blocks platelet adhesion to soluble collagen (most probably through the binding to alpha-2/beta-1 integrin (ITGA2/ITGB1)) and binds to purified glycoprotein IIb/IIIa (ITGA2B/ITGB3) in a dose-dependent manner. In vivo, reduces thrombus weight effectively in a rat arteriovenous shunt model and inhibits thrombosis in a carrageenan-induced mouse tail thrombosis model. This Ixodes scapularis (Black-legged tick) protein is Ixodegrin-like peptide.